Here is a 205-residue protein sequence, read N- to C-terminus: uncharacterized protein (205 aa).

Residues 1 to 42 (MSRKRDKPYTNRHTPARISKRRRPWAPSSSEHDEIIDKPITK) are disordered. Over residues 14-24 (TPARISKRRRP) the composition is skewed to basic residues. The segment covering 30-40 (SEHDEIIDKPI) has biased composition (basic and acidic residues). An RRM domain is found at 47–122 (PALVVMGLPA…KKLEVVWATD (76 aa)). The segment at 170-191 (PRSDNTKGISGDGGISSPATTS) is disordered.

This is an uncharacterized protein from Arabidopsis thaliana (Mouse-ear cress).